The sequence spans 326 residues: Ig gamma-1 chain C region (326 aa).

The interval 1–97 is CH1; that stretch reads AETTAPSVYP…ASSTKVDKKI (97 aa). Cys27 and Cys82 are disulfide-bonded. The hinge stretch occupies residues 98 to 112; it reads VPRNCGGDCKPCICT. A CH2 region spans residues 113 to 219; that stretch reads GSEVSSVFIF…PIEKTISKPE (107 aa). Cystine bridges form between Cys140/Cys200 and Cys246/Cys304. N-linked (GlcNAc...) asparagine glycosylation occurs at Asn176. The tract at residues 220–326 is CH3; that stretch reads GRTQVPHVYT…EKSLSHSPGK (107 aa).

The chain is Ig gamma-1 chain C region from Rattus norvegicus (Rat).